The primary structure comprises 195 residues: Imidazoleglycerol-phosphate dehydratase (195 aa).

This sequence belongs to the imidazoleglycerol-phosphate dehydratase family.

The protein localises to the cytoplasm. It catalyses the reaction D-erythro-1-(imidazol-4-yl)glycerol 3-phosphate = 3-(imidazol-4-yl)-2-oxopropyl phosphate + H2O. It participates in amino-acid biosynthesis; L-histidine biosynthesis; L-histidine from 5-phospho-alpha-D-ribose 1-diphosphate: step 6/9. The polypeptide is Imidazoleglycerol-phosphate dehydratase (Methanosphaerula palustris (strain ATCC BAA-1556 / DSM 19958 / E1-9c)).